We begin with the raw amino-acid sequence, 459 residues long: E3 ubiquitin-protein ligase RNF14 (459 aa).

Residues 10-129 (DELLALASIY…QFLKEETLDF (120 aa)) form the RWD domain. The tract at residues 141–169 (SGSQPQCEPAQKHAADASGEKSKVQDLDP) is disordered. Residues 150–169 (AQKHAADASGEKSKVQDLDP) are compositionally biased toward basic and acidic residues. A TRIAD supradomain region spans residues 200 to 441 (KAFCCGICYS…NPDSPCYNQL (242 aa)). Residues cysteine 204, cysteine 207, cysteine 222, histidine 224, cysteine 227, cysteine 230, cysteine 249, cysteine 254, cysteine 293, cysteine 298, cysteine 313, cysteine 316, cysteine 321, cysteine 324, histidine 329, cysteine 334, cysteine 388, and cysteine 391 each coordinate Zn(2+). RING-type zinc fingers lie at residues 204–249 (CGIC…CLNC) and 204–254 (CGIC…EPKC). The IBR-type zinc-finger motif lies at 273-334 (ARYDRLLLQS…RRSYHGLSHC (62 aa)). An RING-type 2; atypical zinc finger spans residues 388–417 (CPCCGTNIQKAHGCNKMTCSSCQKYFCWIC). Cysteine 401 is a catalytic residue. Residues cysteine 406, cysteine 409, cysteine 414, cysteine 417, histidine 429, and cysteine 437 each contribute to the Zn(2+) site.

Belongs to the RBR family. RNF14 subfamily.

Its subcellular location is the cytoplasm. It localises to the nucleus. The catalysed reaction is [E2 ubiquitin-conjugating enzyme]-S-ubiquitinyl-L-cysteine + [acceptor protein]-L-lysine = [E2 ubiquitin-conjugating enzyme]-L-cysteine + [acceptor protein]-N(6)-ubiquitinyl-L-lysine.. It participates in protein modification; protein ubiquitination. Functionally, E3 ubiquitin-protein ligase that plays a key role in the RNF14-RNF25 translation quality control pathway, a pathway that takes place when a ribosome has stalled during translation, and which promotes ubiquitination and degradation of translation factors on stalled ribosomes. Recruited to stalled ribosomes by the ribosome collision sensor GCN1 and mediates 'Lys-6'-linked ubiquitination of target proteins, leading to their degradation. Mediates ubiquitination of eef1a1/eEF1A and etf1/eRF1 translation factors on stalled ribosomes, leading to their degradation. Specifically required to resolve RNA-protein cross-links caused by reactive aldehydes, which trigger translation stress by stalling ribosomes: acts by catalying 'Lys-6'-linked ubiquitination of RNA-protein cross-links, leading to their removal by the ATP-dependent unfoldase VCP and subsequent degradation by the proteasome. Independently of its function in the response to stalled ribosomes, acts as a regulator of transcription in Wnt signaling via its interaction with TCF transcription factors (tcf7/tcf1, tcf7l1/tcf3 and tcf7l2/tcf4). This is E3 ubiquitin-protein ligase RNF14 from Danio rerio (Zebrafish).